We begin with the raw amino-acid sequence, 543 residues long: EH domain-containing protein 2 (543 aa).

Residues S3 and S44 each carry the phosphoserine modification. The Dynamin-type G domain maps to 55-286 (FDGKPMVLVA…DLFRDIQGLP (232 aa)). The interval 65-72 (GQYSTGKT) is G1 motif. 65–72 (GQYSTGKT) serves as a coordination point for ATP. The tract at residues 91–92 (EP) is G2 motif. Residues 153-156 (DTPG) are G3 motif. Residues 219-222 (NKAD) form a G4 motif region. ATP is bound at residue K220. A region of interest (G5 motif) is located at residue V243. W258 is a binding site for ATP. Residues 320-340 (TVFGKENKKKQLILKLPVIFA) form a mediates membrane-binding region. Phosphoserine occurs at positions 438, 468, 470, 484, and 493. Residues 449-537 (DKSKYDEIFY…RRLVPPSKRR (89 aa)) enclose the EH domain. The EF-hand domain maps to 481-516 (LPNSVLGRIWKLSDVDRDGMLDDEEFALASHLIEAK). Residues D494, D496, D498, M500, and E505 each coordinate Ca(2+). Residues 521–543 (GLPTNLPRRLVPPSKRRQKGSAE) form a disordered region. Positions 534–543 (SKRRQKGSAE) are enriched in basic residues.

This sequence belongs to the TRAFAC class dynamin-like GTPase superfamily. Dynamin/Fzo/YdjA family. EHD subfamily. As to quaternary structure, homodimer and homooligomer. Interacts with EHD1. May also interact with EHD3 and EHD4. Interacts with MYOF. Interacts with EHBP1. Interacts with FER1L5 (via second C2 domain). Interacts with CAV1 in a cholesterol-dependent manner. Interacts (via EH domain) with PACSIN2 (via NPF motifs); this interaction probably stabilizes the caveolae. In terms of tissue distribution, detected in lung and adipocytes. Detected at lower levels in heart and skeletal muscle.

The protein localises to the cell membrane. The protein resides in the membrane. It localises to the caveola. It is found in the endosome membrane. Its subcellular location is the cytoplasm. The protein localises to the cytosol. Its activity is regulated as follows. The very low intrinsic ATPase activity is increased upon interaction with liposomes. Functionally, ATP- and membrane-binding protein that controls membrane reorganization/tubulation upon ATP hydrolysis. Plays a role in membrane trafficking between the plasma membrane and endosomes. Important for the internalization of GLUT4. Required for fusion of myoblasts to skeletal muscle myotubes. Required for normal translocation of FER1L5 to the plasma membrane. Regulates the equilibrium between cell surface-associated and cell surface-dissociated caveolae by constraining caveolae at the cell membrane. In Mus musculus (Mouse), this protein is EH domain-containing protein 2.